The primary structure comprises 190 residues: Early nodulin-like protein 12 (190 aa).

An N-terminal signal peptide occupies residues 1 to 21 (MGIIVPVLTLVFLLFAKVSHG). The Phytocyanin domain occupies 26 to 130 (RVILVGGSVG…GEKITLVVLA (105 aa)). N-linked (GlcNAc...) asparagine glycosylation occurs at Asn-44. A disulfide bridge links Cys-84 with Cys-118. Residues 135-164 (GGGSSSGDAPKVSPVSPTAQTPAPAPGPAA) form a disordered region. Over residues 151–164 (PTAQTPAPAPGPAA) the composition is skewed to low complexity. Residue Asn-167 is the site of GPI-anchor amidated asparagine attachment. The propeptide at 168-190 (AAVGLKVASGWFLTAVVVGLAMA) is removed in mature form.

The protein belongs to the early nodulin-like (ENODL) family. In terms of tissue distribution, confined to flowers and siliques. Expressed in female gametophytes.

It is found in the cell membrane. May act as a carbohydrate transporter. Required, together with ENODL11, ENODL12, ENODL13, ENODL14 and ENODL15, for male-female communication and pollen tube reception and burst at the synergid cell surface of the female gametophyte. In Arabidopsis thaliana (Mouse-ear cress), this protein is Early nodulin-like protein 12.